A 446-amino-acid polypeptide reads, in one-letter code: Tubulin beta-1 chain (446 aa).

Residues 1-4 (MREI) carry the MREI motif motif. 8 residues coordinate GTP: Gln-11, Glu-69, Ser-138, Gly-142, Thr-143, Gly-144, Asn-204, and Asn-226. Position 69 (Glu-69) interacts with Mg(2+). The segment at 426–446 (QDATAEEEGEFEEEGEYEDGA) is disordered. Acidic residues predominate over residues 429 to 446 (TAEEEGEFEEEGEYEDGA). 5-glutamyl polyglutamate is present on Glu-438.

The protein belongs to the tubulin family. Dimer of alpha and beta chains. A typical microtubule is a hollow water-filled tube with an outer diameter of 25 nm and an inner diameter of 15 nM. Alpha-beta heterodimers associate head-to-tail to form protofilaments running lengthwise along the microtubule wall with the beta-tubulin subunit facing the microtubule plus end conferring a structural polarity. Microtubules usually have 13 protofilaments but different protofilament numbers can be found in some organisms and specialized cells. The cofactor is Mg(2+). In terms of processing, some glutamate residues at the C-terminus are polyglycylated, resulting in polyglycine chains on the gamma-carboxyl group. Glycylation is mainly limited to tubulin incorporated into axonemes (cilia and flagella) whereas glutamylation is prevalent in neuronal cells, centrioles, axonemes, and the mitotic spindle. Both modifications can coexist on the same protein on adjacent residues, and lowering polyglycylation levels increases polyglutamylation, and reciprocally. The precise function of polyglycylation is still unclear. Post-translationally, some glutamate residues at the C-terminus are polyglutamylated, resulting in polyglutamate chains on the gamma-carboxyl group. Polyglutamylation plays a key role in microtubule severing by spastin (SPAST). SPAST preferentially recognizes and acts on microtubules decorated with short polyglutamate tails: severing activity by SPAST increases as the number of glutamates per tubulin rises from one to eight, but decreases beyond this glutamylation threshold. As to expression, brain.

It is found in the cytoplasm. Its subcellular location is the cytoskeleton. Functionally, tubulin is the major constituent of microtubules, a cylinder consisting of laterally associated linear protofilaments composed of alpha- and beta-tubulin heterodimers. Microtubules grow by the addition of GTP-tubulin dimers to the microtubule end, where a stabilizing cap forms. Below the cap, tubulin dimers are in GDP-bound state, owing to GTPase activity of alpha-tubulin. This Notothenia neglecta (Yellowbelly rockcod) protein is Tubulin beta-1 chain (tubb1).